Reading from the N-terminus, the 197-residue chain is Small ribosomal subunit protein uS5 (197 aa).

Over residues 1–17 (MAERENRGRGRGRNREE) the composition is skewed to basic and acidic residues. Disordered regions lie at residues 1–22 (MAER…TPEF) and 158–197 (NESS…SEEA). The region spanning 22-85 (FADRLVAINR…EQAKRQLIRV (64 aa)) is the S5 DRBM domain. The segment covering 172 to 186 (KVADILPKRDDHPQI) has biased composition (basic and acidic residues).

The protein belongs to the universal ribosomal protein uS5 family. Part of the 30S ribosomal subunit. Contacts proteins S4 and S8.

Functionally, with S4 and S12 plays an important role in translational accuracy. In terms of biological role, located at the back of the 30S subunit body where it stabilizes the conformation of the head with respect to the body. The sequence is that of Small ribosomal subunit protein uS5 from Jannaschia sp. (strain CCS1).